The primary structure comprises 432 residues: Succinate--CoA ligase [GDP-forming] subunit beta, mitochondrial (432 aa).

Residues 1-37 (MAAPVGAQARKLLRDLVLRPPLLAARSQVVQLTSRRW) constitute a mitochondrion transit peptide. One can recognise an ATP-grasp domain in the interval 46 to 274 (KKLMSDNGVK…NAEFRQKDIF (229 aa)). Gln-57 contributes to the GTP binding site. N6-acetyllysine is present on Lys-73. Lys-78 is subject to N6-succinyllysine. 90–92 (GRG) is a binding site for GTP. An N6-acetyllysine mark is found at Lys-111, Lys-132, and Lys-139. Leu-146 contributes to the GTP binding site. Ser-161 bears the Phosphoserine mark. N6-acetyllysine occurs at positions 200, 218, and 227. Mg(2+) contacts are provided by Asn-243 and Asp-257. N6-acetyllysine is present on Lys-271. Asn-308 is a binding site for substrate. Lys-338 carries the post-translational modification N6-succinyllysine. Lys-347 is subject to N6-acetyllysine. 365–367 (GIV) serves as a coordination point for substrate. Residues Lys-386 and Lys-423 each carry the N6-acetyllysine modification.

It belongs to the succinate/malate CoA ligase beta subunit family. GTP-specific subunit beta subfamily. As to quaternary structure, heterodimer of an alpha and a beta subunit. The beta subunit determines specificity for GTP. Mg(2+) is required as a cofactor.

Its subcellular location is the mitochondrion. It catalyses the reaction GTP + succinate + CoA = succinyl-CoA + GDP + phosphate. It participates in carbohydrate metabolism; tricarboxylic acid cycle; succinate from succinyl-CoA (ligase route): step 1/1. GTP-specific succinyl-CoA synthetase functions in the citric acid cycle (TCA), coupling the hydrolysis of succinyl-CoA to the synthesis of GTP and thus represents the only step of substrate-level phosphorylation in the TCA. The beta subunit provides nucleotide specificity of the enzyme and binds the substrate succinate, while the binding sites for coenzyme A and phosphate are found in the alpha subunit. The sequence is that of Succinate--CoA ligase [GDP-forming] subunit beta, mitochondrial from Bos taurus (Bovine).